Reading from the N-terminus, the 290-residue chain is Nitrogenase iron protein 2 (290 aa).

Position 10–17 (10–17 (GKGGIGKS)) interacts with ATP. Cys-98 serves as a coordination point for [4Fe-4S] cluster. Arg-101 carries the ADP-ribosylarginine; by dinitrogenase reductase ADP-ribosyltransferase modification. Cys-133 contributes to the [4Fe-4S] cluster binding site.

This sequence belongs to the NifH/BchL/ChlL family. As to quaternary structure, homodimer. The cofactor is [4Fe-4S] cluster. Post-translationally, the reversible ADP-ribosylation of Arg-101 inactivates the nitrogenase reductase and regulates nitrogenase activity.

The enzyme catalyses N2 + 8 reduced [2Fe-2S]-[ferredoxin] + 16 ATP + 16 H2O = H2 + 8 oxidized [2Fe-2S]-[ferredoxin] + 2 NH4(+) + 16 ADP + 16 phosphate + 6 H(+). In terms of biological role, the key enzymatic reactions in nitrogen fixation are catalyzed by the nitrogenase complex, which has 2 components: the iron protein (component 2) and a component 1 which is either a molybdenum-iron protein, a vanadium-iron, or an iron-iron protein. The protein is Nitrogenase iron protein 2 (vnfH) of Azotobacter chroococcum mcd 1.